The sequence spans 507 residues: ATP synthase subunit alpha 2 (507 aa).

171–178 is an ATP binding site; the sequence is GDRATGKT.

It belongs to the ATPase alpha/beta chains family. F-type ATPases have 2 components, CF(1) - the catalytic core - and CF(0) - the membrane proton channel. CF(1) has five subunits: alpha(3), beta(3), gamma(1), delta(1), epsilon(1). CF(0) has three main subunits: a(1), b(2) and c(9-12). The alpha and beta chains form an alternating ring which encloses part of the gamma chain. CF(1) is attached to CF(0) by a central stalk formed by the gamma and epsilon chains, while a peripheral stalk is formed by the delta and b chains.

Its subcellular location is the cell inner membrane. It catalyses the reaction ATP + H2O + 4 H(+)(in) = ADP + phosphate + 5 H(+)(out). Its function is as follows. Produces ATP from ADP in the presence of a proton gradient across the membrane. The alpha chain is a regulatory subunit. This Gluconobacter oxydans (strain 621H) (Gluconobacter suboxydans) protein is ATP synthase subunit alpha 2.